The sequence spans 124 residues: PEP-dependent dihydroxyacetone kinase 1, phosphoryl donor subunit DhaM (124 aa).

One can recognise a PTS EIIA type-4 domain in the interval 4 to 124; it reads PYGVVIISHS…AANLKTIEIK (121 aa). His-12 acts as the Tele-phosphohistidine intermediate in catalysis.

It belongs to the PEP-utilizing enzyme family. In terms of assembly, homodimer. The dihydroxyacetone kinase complex is composed of a homodimer of DhaM, a homodimer of DhaK and the subunit DhaL.

It localises to the cytoplasm. It catalyses the reaction dihydroxyacetone + phosphoenolpyruvate = dihydroxyacetone phosphate + pyruvate. Its function is as follows. Component of the dihydroxyacetone kinase complex, which is responsible for the phosphoenolpyruvate (PEP)-dependent phosphorylation of dihydroxyacetone. DhaM serves as the phosphoryl donor. Is phosphorylated by phosphoenolpyruvate in an EI- and HPr-dependent reaction, and a phosphorelay system on histidine residues finally leads to phosphoryl transfer to DhaL and dihydroxyacetone. In Listeria innocua serovar 6a (strain ATCC BAA-680 / CLIP 11262), this protein is PEP-dependent dihydroxyacetone kinase 1, phosphoryl donor subunit DhaM.